The sequence spans 247 residues: tRNA pseudouridine synthase A (247 aa).

D58 (nucleophile) is an active-site residue. Y116 serves as a coordination point for substrate.

This sequence belongs to the tRNA pseudouridine synthase TruA family. Homodimer.

The enzyme catalyses uridine(38/39/40) in tRNA = pseudouridine(38/39/40) in tRNA. Its function is as follows. Formation of pseudouridine at positions 38, 39 and 40 in the anticodon stem and loop of transfer RNAs. The chain is tRNA pseudouridine synthase A from Hydrogenobaculum sp. (strain Y04AAS1).